We begin with the raw amino-acid sequence, 401 residues long: Stearoyl-[acyl-carrier-protein] 9-desaturase 3, chloroplastic (401 aa).

A disordered region spans residues 1 to 31; the sequence is MSMALLLTSPAMKQKPAVITSPRRGSSPSRR. The transit peptide at 1–35 directs the protein to the chloroplast; that stretch reads MSMALLLTSPAMKQKPAVITSPRRGSSPSRRLRVS. Fe cation-binding residues include Glu-140, Glu-178, His-181, Glu-231, Glu-264, and His-267.

This sequence belongs to the fatty acid desaturase type 2 family. As to quaternary structure, homodimer. It depends on Fe(2+) as a cofactor. Ubiquitously expressed with a preference in leaves, flowers and stems.

It is found in the plastid. The protein localises to the chloroplast. It catalyses the reaction octadecanoyl-[ACP] + 2 reduced [2Fe-2S]-[ferredoxin] + O2 + 2 H(+) = (9Z)-octadecenoyl-[ACP] + 2 oxidized [2Fe-2S]-[ferredoxin] + 2 H2O. The protein operates within lipid metabolism; fatty acid metabolism. Converts stearoyl-ACP to oleoyl-ACP by introduction of a cis double bond between carbons 9 and 10 of the acyl chain. Also able to convert palmitoyl-ACP to palmitoleoyl-ACP at the C9 position. Exhibits delta-9 palmitoyl-[acyl-carrier-protein] desaturase (PAD) activity. Involved in omega-7 monounsaturated fatty acid biosynthesis, especially in the endosperm oil. The protein is Stearoyl-[acyl-carrier-protein] 9-desaturase 3, chloroplastic (S-ACP-DES3) of Arabidopsis thaliana (Mouse-ear cress).